We begin with the raw amino-acid sequence, 699 residues long: MAREYKIEDYRNFGIMAHIDAGKTTTTERILYYTGKSHKIGEVHDGAATMDWMEQEQERGITITSAATTTFWKGRDGKMRRFNIIDTPGHVDFTIEVERSLRVLDGAIALLDANAGVEPQTETVWRQAEKYNVPRMIFCNKMDKTGADFYRSVEMIKTRLGATAVVMQLPIGAESDFKGVVDLVEMNALIWRDESLGAQWDVVEIPDDLKAKAEEYREKLIETVVEIDEAAMEAYLEGNMPDNDKIRELVRRGTIDVKFHPMFCGTAFKNKGVQPLLDAVVDYLPSPLDIPAIKGIDFKTEADIERHADDAEPLSMLAFKIMNDPFVGSLTFARIYSGKLEKGSSVLNTVKDKRERVGRMLQMHSNSREDIEEAFAGDIVALAGLKETTTGDTLCDPLKPVILERMEFPEPVIQIAIEPKSKGDQEKMGLALNRLAAEDPSFRVKTDQESGQTIIAGMGELHLDIIVDRMRREFKVEANVGAPQVAYRETITRQTEEDYTHKKQTGGTGQFARVKIIFEPNPEGEDFKFESKIVGGAVPKEYIPGVQKGIESVLSSGPLAGFPMLGVKATLIDGAFHDVDSSVLAFEIASRACFREAAKKAGAQLLEPMMKVEVVTPEDYVGDVIGDLNSRRGQIQGQESRGIAVVISANVPLANMFKYVDNLRSMSQGRAQYTMTFDHYAPVPSNVATEIQAKYSGQK.

The region spanning Glu8 to Leu288 is the tr-type G domain. Residues Ala17–Thr24, Asp86–His90, and Asn140–Asp143 each bind GTP.

The protein belongs to the TRAFAC class translation factor GTPase superfamily. Classic translation factor GTPase family. EF-G/EF-2 subfamily.

The protein localises to the cytoplasm. Functionally, catalyzes the GTP-dependent ribosomal translocation step during translation elongation. During this step, the ribosome changes from the pre-translocational (PRE) to the post-translocational (POST) state as the newly formed A-site-bound peptidyl-tRNA and P-site-bound deacylated tRNA move to the P and E sites, respectively. Catalyzes the coordinated movement of the two tRNA molecules, the mRNA and conformational changes in the ribosome. This Rhizobium etli (strain ATCC 51251 / DSM 11541 / JCM 21823 / NBRC 15573 / CFN 42) protein is Elongation factor G.